We begin with the raw amino-acid sequence, 471 residues long: Glutamate--tRNA ligase 1 (471 aa).

Residues 15-25 carry the 'HIGH' region motif; the sequence is PSPTGYLHIGG. The short motif at 243–247 is the 'KMSKS' region element; that stretch reads KLSKR. Lys-246 provides a ligand contact to ATP.

It belongs to the class-I aminoacyl-tRNA synthetase family. Glutamate--tRNA ligase type 1 subfamily. Monomer.

Its subcellular location is the cytoplasm. The enzyme catalyses tRNA(Glu) + L-glutamate + ATP = L-glutamyl-tRNA(Glu) + AMP + diphosphate. In terms of biological role, catalyzes the attachment of glutamate to tRNA(Glu) in a two-step reaction: glutamate is first activated by ATP to form Glu-AMP and then transferred to the acceptor end of tRNA(Glu). This chain is Glutamate--tRNA ligase 1, found in Dinoroseobacter shibae (strain DSM 16493 / NCIMB 14021 / DFL 12).